A 274-amino-acid polypeptide reads, in one-letter code: 4-deoxy-L-threo-5-hexosulose-uronate ketol-isomerase (274 aa).

4 residues coordinate Zn(2+): His192, His194, Glu199, and His241.

The protein belongs to the KduI family. Zn(2+) serves as cofactor.

It carries out the reaction 5-dehydro-4-deoxy-D-glucuronate = 3-deoxy-D-glycero-2,5-hexodiulosonate. It participates in glycan metabolism; pectin degradation; 2-dehydro-3-deoxy-D-gluconate from pectin: step 4/5. Catalyzes the isomerization of 5-dehydro-4-deoxy-D-glucuronate to 3-deoxy-D-glycero-2,5-hexodiulosonate. The protein is 4-deoxy-L-threo-5-hexosulose-uronate ketol-isomerase of Agrobacterium fabrum (strain C58 / ATCC 33970) (Agrobacterium tumefaciens (strain C58)).